The following is an 809-amino-acid chain: Lon protease (809 aa).

Residues leucine 42–leucine 242 form the Lon N-terminal domain. ATP is bound at residue glycine 395 to threonine 402. Residues leucine 629–glycine 809 form the Lon proteolytic domain. Residues serine 716 and lysine 759 contribute to the active site.

This sequence belongs to the peptidase S16 family. As to quaternary structure, homohexamer. Organized in a ring with a central cavity.

The protein resides in the cytoplasm. The enzyme catalyses Hydrolysis of proteins in presence of ATP.. Its function is as follows. ATP-dependent serine protease that mediates the selective degradation of mutant and abnormal proteins as well as certain short-lived regulatory proteins. Required for cellular homeostasis and for survival from DNA damage and developmental changes induced by stress. Degrades polypeptides processively to yield small peptide fragments that are 5 to 10 amino acids long. Binds to DNA in a double-stranded, site-specific manner. The chain is Lon protease from Magnetococcus marinus (strain ATCC BAA-1437 / JCM 17883 / MC-1).